The chain runs to 120 residues: METRLNLLCEAGVIDKDICKGMMQVVNVLETECHLPVRSEQGTMAMTHMASALMRSRRGEEIEPLDNELLAELAQSSHWQAVVQLHQVLLKEFALEVNPCEEGYLLANLYGLWMAANEEV.

The PRD domain occupies 13–119; it reads VIDKDICKGM…YGLWMAANEE (107 aa).

This is an uncharacterized protein from Escherichia coli (strain K12).